A 491-amino-acid polypeptide reads, in one-letter code: uncharacterized protein (491 aa).

A run of 12 helical transmembrane segments spans residues 48–68 (LILVSAFALLGPMASSMVAPC), 85–105 (ALILSIYLLVFAISPMISAPL), 112–132 (RMLLQVGNVIFIVFNMACGLA), 140–160 (IFRFLAGFGSATPMGLGSGTI), 174–194 (AVMSLAPLLGPTIGPVVSGFI), 202–222 (WIFWSTTIFSGFIFALSLPLL), 277–297 (PIVILCSTYMAIQYGILYLVL), 317–337 (LNYIASGIGLIFGSQASGIFI), 358–378 (VPVILLGTFFFPAGLFIYGWT), 383–403 (THWIGPDIGAAMFNIGLMLGW), 408–428 (TYLIDSFMIYAASSTAVACCV), and 455–475 (LLAFIVLGSSIITCSLLWFGG).

The protein belongs to the major facilitator superfamily.

Its subcellular location is the membrane. This is an uncharacterized protein from Schizosaccharomyces pombe (strain 972 / ATCC 24843) (Fission yeast).